The chain runs to 212 residues: Nucleoside triphosphate pyrophosphatase (212 aa).

D79 (proton acceptor) is an active-site residue.

The protein belongs to the Maf family. It depends on a divalent metal cation as a cofactor.

It localises to the cytoplasm. It carries out the reaction a ribonucleoside 5'-triphosphate + H2O = a ribonucleoside 5'-phosphate + diphosphate + H(+). The catalysed reaction is a 2'-deoxyribonucleoside 5'-triphosphate + H2O = a 2'-deoxyribonucleoside 5'-phosphate + diphosphate + H(+). In terms of biological role, nucleoside triphosphate pyrophosphatase. May have a dual role in cell division arrest and in preventing the incorporation of modified nucleotides into cellular nucleic acids. This is Nucleoside triphosphate pyrophosphatase from Nocardia farcinica (strain IFM 10152).